Here is a 747-residue protein sequence, read N- to C-terminus: Meprin A subunit alpha (747 aa).

The first 20 residues, 1–20 (MLWIQPACLLSLIFSAHIAA), serve as a signal peptide directing secretion. The propeptide occupies 21-64 (VSIKHLLNGSDHDTDVGEQKDIFEINLAAGLNLFQGDILLPRTR). Residues N28 and N139 are each glycosylated (N-linked (GlcNAc...) asparagine). One can recognise a Peptidase M12A domain in the interval 65 to 259 (NAMRDPSSRW…IRLNRMYNCT (195 aa)). Topologically, residues 65 to 713 (NAMRDPSSRW…FYAGERCQAM (649 aa)) are extracellular. 3 cysteine pairs are disulfide-bonded: C106/C258, C127/C146, and C268/C430. H154 provides a ligand contact to Zn(2+). E155 is a catalytic residue. H158 and H164 together coordinate Zn(2+). N-linked (GlcNAc...) asparagine glycosylation is found at N221, N257, N317, N413, N439, N533, and N540. In terms of domain architecture, MAM spans 263–432 (TLLDHCDFEK…ITLTETPCPA (170 aa)). Positions 433–594 (GVWTIRNISQ…GDSLIIFVDF (162 aa)) constitute an MATH domain. Residues 638 to 663 (ESLPSSLGQRHPSRQKRSVENTGPME) are disordered. The EGF-like domain maps to 671 to 711 (FRDPCDPNPCQNEGTCVNVKGMASCRCVSGHAFFYAGERCQ). 3 cysteine pairs are disulfide-bonded: C675–C686, C680–C695, and C697–C710. A helical membrane pass occupies residues 714–741 (HVHGSLLGLLIGCIAGLIFLTFVTFSTT). Topologically, residues 742 to 747 (NGKLRQ) are cytoplasmic.

Homotetramer consisting of disulfide-linked alpha subunits, homooligomer consisting of disulfide-linked alpha subunit homodimers, or heterotetramer of two alpha and two beta subunits formed by non-covalent association of two disulfide-linked heterodimers. Genetic factors determine which oligomer(s) will be formed (strain-specific). Interacts with MBL2 through its carbohydrate moiety. This interaction may inhibit its catalytic activity. It depends on Zn(2+) as a cofactor. In terms of processing, N-glycosylated; contains GlcNAc, galactose, mannose and a small amount of fucose. In terms of tissue distribution, kidney, intestinal brush borders and salivary ducts.

Its subcellular location is the membrane. The enzyme catalyses Hydrolysis of protein and peptide substrates preferentially on carboxyl side of hydrophobic residues.. With respect to regulation, inhibited by metal ion chelators EDTA and 1,10-phenanthroline, bradykinin analogs, cysteine, CONA65, and several hydroxamate compounds, particularly tyrosine hydroxamate. Not inhibited by 3,4-dichloroisocourmarin, soybean trypsin inhibitor, or the cysteine proteinase inhibitors iodoacetic acid and E-64. The protein is Meprin A subunit alpha (Mep1a) of Mus musculus (Mouse).